Reading from the N-terminus, the 500-residue chain is MPDAVKVGFVPFATPARGTLIVFCDDGLKFGATATKALGAAVATVKRAAATAQFKGKSGSAMDLLAPEGLKVGRLIVVGAGKVASINDYDLLKLGGAVAGKIGAGDTAVTVVADLPTGAMKPEQAAAIASGIRLRAYKFDRYKTKKKDDENGAANASVTLAVADPAAAKKAFTPDSHVVDGVILARELVNEPPNVLYPEEFAKRAAQLKKLGVEVQILDVKAMTQLKMGALLGVSQGSAHPGRTVIMRWNGGKKGEQPLAFVGKGVCFDTGGISIKPSASMEDMKGDMGGAACVVGLMHALAARKAKVNAVGAIGLVENMPDGNAQRPGDIVTSMSGQTIEIINTDAEGRLVLADVLWYVAQKHKPKFMVDLATLTGAIMVALGTEYAGLFSNNDQLAERLAAVGQSTGEKVWRMPLGPEYDKQIDSQFADMKNTGSRNGGSITAAQFLQRFVDGTPWAHLDIAGTAMASPKNEINQSWGSGYGVRLLNQLVAEYYEAKK.

2 residues coordinate Mn(2+): Lys264 and Asp269. Lys276 is an active-site residue. Asp287, Asp346, and Glu348 together coordinate Mn(2+). Residue Arg350 is part of the active site.

The protein belongs to the peptidase M17 family. Mn(2+) is required as a cofactor.

The protein resides in the cytoplasm. The catalysed reaction is Release of an N-terminal amino acid, Xaa-|-Yaa-, in which Xaa is preferably Leu, but may be other amino acids including Pro although not Arg or Lys, and Yaa may be Pro. Amino acid amides and methyl esters are also readily hydrolyzed, but rates on arylamides are exceedingly low.. The enzyme catalyses Release of an N-terminal amino acid, preferentially leucine, but not glutamic or aspartic acids.. Its function is as follows. Presumably involved in the processing and regular turnover of intracellular proteins. Catalyzes the removal of unsubstituted N-terminal amino acids from various peptides. The chain is Probable cytosol aminopeptidase from Rhodopseudomonas palustris (strain TIE-1).